We begin with the raw amino-acid sequence, 417 residues long: Serine hydroxymethyltransferase (417 aa).

Residues L121 and 125-127 (GHL) each bind (6S)-5,6,7,8-tetrahydrofolate. Residue K230 is modified to N6-(pyridoxal phosphate)lysine. 355–357 (SPF) is a (6S)-5,6,7,8-tetrahydrofolate binding site.

The protein belongs to the SHMT family. In terms of assembly, homodimer. Requires pyridoxal 5'-phosphate as cofactor.

The protein localises to the cytoplasm. The enzyme catalyses (6R)-5,10-methylene-5,6,7,8-tetrahydrofolate + glycine + H2O = (6S)-5,6,7,8-tetrahydrofolate + L-serine. Its pathway is one-carbon metabolism; tetrahydrofolate interconversion. It functions in the pathway amino-acid biosynthesis; glycine biosynthesis; glycine from L-serine: step 1/1. In terms of biological role, catalyzes the reversible interconversion of serine and glycine with tetrahydrofolate (THF) serving as the one-carbon carrier. This reaction serves as the major source of one-carbon groups required for the biosynthesis of purines, thymidylate, methionine, and other important biomolecules. Also exhibits THF-independent aldolase activity toward beta-hydroxyamino acids, producing glycine and aldehydes, via a retro-aldol mechanism. The chain is Serine hydroxymethyltransferase from Nitrosococcus oceani (strain ATCC 19707 / BCRC 17464 / JCM 30415 / NCIMB 11848 / C-107).